The sequence spans 1576 residues: MSTKGRGIFPFSKIKLMLASPDDIRSWSHGEVKRPETLNYRTLKPEKDGLFCAKIFGPTKDYECLCGKYRGKRYEGKICEKCGVEVTSSYVRRERFGHIELAAPVVHIWFLKSTPSKIGTLLNLTSRDVERVAYFESYLVIEYPNEEEEEKFEKEEGTIPLNDGISTKWVKLHVVNEEEFEEKYAFSIDEKYEYGMGAEILKEVLSKIDLEAYSKKLKELVKPYSLGFEDLGREVAEKYKNLYQKLVKVIADDFRAYGVELKGLEDKGLTLEQAIHRIITEELYLNVETGEVEFEDCGDNCLTGREALRVYYEKVREHKRDIPIFEKIKEDVRTAVLREVSEARIRKALRILQLVEGFKKSGNRPEWMILEVLPVIPPELRPLVALDGGRFATSDLNDLYRRVINRNNRLKRLIELSAPDIIIRNEKRMLQEAVDALIDNGKRGNPVKQNGRPLKSLADYLKGKQGRFRQNLLGKRVDYSGRSVIVVGPELQMHQCGLPKIMALELFKPFVYRRLEEKGYATSIKHAKKLVEQKTPEVWECLEEVVKQHPVLLNRAPTLHRPSIQAFEPVLVEGKAIQLHPLVCPPFNADFDGDQMAVHVPLGIEAQLESYILMLSTQNILSPAHGKPLTMPSQDMVLGTYYMTHDPIPGRKGEGKAFTSYEEVIKALELGHVDIHAKIKFKVGKEWIETTPGRVLFNSIMPEGQPFVNETLDKKRLSKLITNLYIAVGNEETVKFLDRVKELGFLRSTLAGISIGIDDLQVPKVKEKIIKEALKKTEEIWNQYVQGIITNKERYNRIIDVWSEATNAVSKAMFEEIEHSTEIRNGKEYPGTFNPIYMMAVSGARGNRDQIRQLAGMRGLMAKHSGEFIETPIISNFREGLSVLEYFISTYGARKGLADTALKTAFAGYLTRRLVDVAQDITITEKDCGTVKGFEMEPIVEAGEERVPLKDRIFGRVLAEDVKDPYTGEVIAKRNEVVDEKLAERIARAGIEKVKVRSPLTCEAKHGVCAMCYGWDLSQRKIVSVGEAVGIIAAQSIGEPGTQLTMRTFHIGGAATAQKVQSFVKTESEGTVKFYNVKFIVNRKGEKINVSKDAAIGVLDEKGRLLERHTIPYGARLLVDEGQKVKAGTKLADWDPFNTYIIAEVGGKIELRDIILDVTVREERDVITGKTATVVSFMRPKDAMLHTPRIAVITEDGKEYVYDLPVNAILNIPADKLTLEWRICPTCSESEETTIQHQYYVVKELEVQPGDILARIPKETAKVRDIVGGLPRVEELFEARKPKNPAILSEIDGYVKIYEDADEVIVFNPRTGETKKYAIKKDELILVRHGQYIKKGQKITETKVAEIDGQVRIKGRGFKVIVYNPETGLQREYFVPKGKFLLVKEGDYVKAGDPLTDGTPVPEEILRIKGIEELEKFLLKEVQMVYKLQGVDINDKHFEIIIRQMLKKVRIIDPGDSRFLVGEEVDKEELEEEIQRIKLEGGKLPKAEPVLVGITRAALSTRSWISAASFQETTRVLTDASVEGKIDELRGLKENVIIGNLIPAGTGVDEYKEVDVIPAEEKVLEEKPQSSEEETS.

Zn(2+) contacts are provided by Cys-64, Cys-66, Cys-79, and Cys-82. Mg(2+) contacts are provided by Asp-590, Asp-592, and Asp-594. Zn(2+) is bound by residues Cys-928, Cys-1002, Cys-1009, and Cys-1012.

Belongs to the RNA polymerase beta' chain family. As to quaternary structure, the RNAP catalytic core consists of 2 alpha, 1 beta, 1 beta' and 1 omega subunit. When a sigma factor is associated with the core the holoenzyme is formed, which can initiate transcription. Mg(2+) is required as a cofactor. Requires Zn(2+) as cofactor.

The enzyme catalyses RNA(n) + a ribonucleoside 5'-triphosphate = RNA(n+1) + diphosphate. Its function is as follows. DNA-dependent RNA polymerase catalyzes the transcription of DNA into RNA using the four ribonucleoside triphosphates as substrates. This Aquifex pyrophilus protein is DNA-directed RNA polymerase subunit beta'.